Consider the following 469-residue polypeptide: MVISVATPRRSIRDAVLGGVLGAGGRQLYQPLRCAFYDGAAGGGLTAALSEDGAEGGVPLPCGRKTAAAKNVLILMSDTGGGHRASAEALRDAFRLEFGDAYQVFVRDLGKEYGGWPLNDMERSYKFMIRHVRLWKVAFHGTSPRWVHGMYLAALAYFYANEVVAGIMRYNPDIIISVHPLMQHIPLWVLKWQSLHPKVPFVTVITDLNTCHPTWFHHGVTRCYCPSAEVAKRALLRGLEPSQIRVYGLPIRPSFCRAVLDKDELRKELDMDPDLPAVLLMGGGEGMGPVEETATALSDELYDRRRRRPVGQIVVICGRNQVLRSTLQSSRWNVPVKIRGFEKQMEKWMGACDCIITKAGPGTIAEALIRGLPIILNDFIPGQEVGNVPYVVDNGAGVFSKDPREAARQVARWFTTHTNELRRYSLNALKLAQPEAVFDIVKDIHKLQQQPATVTRIPYSLTSSFSYSI.

A chloroplast-targeting transit peptide spans 1–42 (MVISVATPRRSIRDAVLGGVLGAGGRQLYQPLRCAFYDGAAG).

This sequence belongs to the glycosyltransferase 28 family.

Its subcellular location is the plastid. It localises to the chloroplast membrane. It carries out the reaction a 1,2-diacyl-sn-glycerol + UDP-alpha-D-galactose = a 1,2-diacyl-3-O-(beta-D-galactosyl)-sn-glycerol + UDP + H(+). Involved in the synthesis of the major structural component of photosynthetic membranes. The chain is Probable monogalactosyldiacylglycerol synthase 2, chloroplastic (MGD2) from Oryza sativa subsp. indica (Rice).